The sequence spans 148 residues: Deoxyuridine 5'-triphosphate nucleotidohydrolase (148 aa).

Substrate is bound by residues 67 to 69 (RSG), Asn80, 84 to 86 (LID), and Met94.

It belongs to the dUTPase family. Requires Mg(2+) as cofactor.

The catalysed reaction is dUTP + H2O = dUMP + diphosphate + H(+). It functions in the pathway pyrimidine metabolism; dUMP biosynthesis; dUMP from dCTP (dUTP route): step 2/2. Functionally, this enzyme is involved in nucleotide metabolism: it produces dUMP, the immediate precursor of thymidine nucleotides and it decreases the intracellular concentration of dUTP so that uracil cannot be incorporated into DNA. The protein is Deoxyuridine 5'-triphosphate nucleotidohydrolase of Francisella tularensis subsp. holarctica (strain FTNF002-00 / FTA).